A 182-amino-acid chain; its full sequence is ATP synthase subunit delta (182 aa).

This sequence belongs to the ATPase delta chain family. As to quaternary structure, F-type ATPases have 2 components, F(1) - the catalytic core - and F(0) - the membrane proton channel. F(1) has five subunits: alpha(3), beta(3), gamma(1), delta(1), epsilon(1). F(0) has three main subunits: a(1), b(2) and c(10-14). The alpha and beta chains form an alternating ring which encloses part of the gamma chain. F(1) is attached to F(0) by a central stalk formed by the gamma and epsilon chains, while a peripheral stalk is formed by the delta and b chains.

It localises to the cell membrane. In terms of biological role, f(1)F(0) ATP synthase produces ATP from ADP in the presence of a proton or sodium gradient. F-type ATPases consist of two structural domains, F(1) containing the extramembraneous catalytic core and F(0) containing the membrane proton channel, linked together by a central stalk and a peripheral stalk. During catalysis, ATP synthesis in the catalytic domain of F(1) is coupled via a rotary mechanism of the central stalk subunits to proton translocation. This protein is part of the stalk that links CF(0) to CF(1). It either transmits conformational changes from CF(0) to CF(1) or is implicated in proton conduction. In Lactobacillus johnsonii (strain CNCM I-12250 / La1 / NCC 533), this protein is ATP synthase subunit delta.